The following is a 379-amino-acid chain: Probable protein arginine N-methyltransferase 6.1 (379 aa).

Residues Met-1 to Ala-35 form a disordered region. A compositionally biased stretch (low complexity) spans Leu-19–Ala-35. One can recognise an SAM-dependent MTase PRMT-type domain in the interval Asp-45–Met-379. Residues His-58, Arg-67, Gly-91, Glu-113, and Glu-142 each coordinate S-adenosyl-L-methionine. Residues Glu-156 and Glu-165 contribute to the active site.

This sequence belongs to the class I-like SAM-binding methyltransferase superfamily. Protein arginine N-methyltransferase family. PRMT6 subfamily.

Arginine methyltransferase that can both catalyze the formation of omega-N monomethylarginine (MMA) and asymmetrical dimethylarginine (aDMA). This is Probable protein arginine N-methyltransferase 6.1 (PRMT6.1) from Oryza sativa subsp. indica (Rice).